The primary structure comprises 840 residues: DNA gyrase subunit A (840 aa).

One can recognise a Topo IIA-type catalytic domain in the interval Leu51–Leu516. Tyr139 functions as the O-(5'-phospho-DNA)-tyrosine intermediate in the catalytic mechanism. The short motif at Gln543–Gly549 is the GyrA-box element.

This sequence belongs to the type II topoisomerase GyrA/ParC subunit family. Heterotetramer, composed of two GyrA and two GyrB chains. In the heterotetramer, GyrA contains the active site tyrosine that forms a transient covalent intermediate with DNA, while GyrB binds cofactors and catalyzes ATP hydrolysis.

It localises to the cytoplasm. It catalyses the reaction ATP-dependent breakage, passage and rejoining of double-stranded DNA.. A type II topoisomerase that negatively supercoils closed circular double-stranded (ds) DNA in an ATP-dependent manner to modulate DNA topology and maintain chromosomes in an underwound state. Negative supercoiling favors strand separation, and DNA replication, transcription, recombination and repair, all of which involve strand separation. Also able to catalyze the interconversion of other topological isomers of dsDNA rings, including catenanes and knotted rings. Type II topoisomerases break and join 2 DNA strands simultaneously in an ATP-dependent manner. This is DNA gyrase subunit A from Ureaplasma parvum serovar 3 (strain ATCC 700970).